Here is an 800-residue protein sequence, read N- to C-terminus: Putative antiporter subunit mnhA2 (800 aa).

Helical transmembrane passes span 3–23 (LVYLLGGLIVIMLIVLMTLFI), 29–49 (FAGYIALLAPILASGYFLAQI), 78–98 (GLGLMFGLIISIIGVAVFFYA), 109–129 (LPRFFLYLLLFMFSMLGIVVS), 133–153 (ILMYVFWELTSVSSFLLISYW), 167–187 (FIITVLGGLALLTGFIMLYII), 202–222 (SISEHALFIPMMIMLLIGAFT), 249–269 (SATMVKAGIFLLFKFTPILGL), 273–293 (YIYIVTFVGLITMIFGSVTAL), 300–320 (GILAYSTISQLGMIMSMVGLG), 337–357 (LILFAGLFHLMNHAIFKCALF), 387–407 (LVMTLAALSMAGVPLLNGFLS), 428–448 (LTIIVVAIGVIASIFTFVYAV), 472–492 (PWLFSLPAIILMVMIPIIFFI), 527–547 (GVNLPLIFSVIVIIVGLILAL), 596–616 (IITVLIFSILIAYGIFQVGLP), 627–647 (GPLEVILGIMISVVGIALVFI), 651–671 (LTMVILNGIIGYSVALFFLLM), 676–696 (LALTQLVVETITTILFIVSFS), 712–732 (TIKIIVSFIMAGAVVTLIFIA), and 768–788 (LDTMFEGIVLIIAGLGIYTLL).

It belongs to the CPA3 antiporters (TC 2.A.63) subunit A family. As to quaternary structure, may form a heterooligomeric complex that consists of seven subunits: mnhA2, mnhB2, mnhC2, mnhD2, mnhE2, mnhF2 and mnhG2.

It localises to the cell membrane. This is Putative antiporter subunit mnhA2 (mnhA2) from Staphylococcus haemolyticus (strain JCSC1435).